The primary structure comprises 433 residues: Inward rectifier potassium channel 18 (433 aa).

Topologically, residues 1-77 (MTAASRANPY…LADMFTTCVD (77 aa)) are cytoplasmic. The chain crosses the membrane as a helical span at residues 78–104 (IRWRYMLLIFSLAFLASWLLFGVIFWV). Residues 105–129 (IAVAHGDLEPAEGHGRTPCVMQVHG) are Extracellular-facing. The segment at residues 130–146 (FMAAFLFSIETQTTIGY) is an intramembrane region (helical; Pore-forming). The short motif at 143–148 (TIGYGL) is the Selectivity filter element. The Extracellular segment spans residues 147-155 (GLRCVTEEC). A helical transmembrane segment spans residues 156–183 (LVAVFMVVAQSIVGCIIDSFMIGAIMAK). The Cytoplasmic portion of the chain corresponds to 184–433 (MARPKKRAQT…QRPYRRGSEI (250 aa)). Residues 387–433 (DEEDEADGDQDGRSRDGLSPQARHDFDRLQAGGGVLEQRPYRRGSEI) form a disordered region. Over residues 396 to 414 (QDGRSRDGLSPQARHDFDR) the composition is skewed to basic and acidic residues.

It belongs to the inward rectifier-type potassium channel (TC 1.A.2.1) family. KCNJ12 subfamily. In terms of assembly, can form heteromeric channels with Kir2.1/KCNJ2. Can form heteromeric channels with Kir2.2/KCNJ12. In terms of processing, probably phosphorylated by PKC; decreases single-channel open probability. In terms of tissue distribution, specifically expressed in skeletal muscle.

The protein resides in the cell membrane. It is found in the endoplasmic reticulum. It carries out the reaction K(+)(in) = K(+)(out). Inward rectifier potassium channels are characterized by a greater tendency to allow potassium to flow into the cell rather than out of it. Their voltage dependence is regulated by the concentration of extracellular potassium; as external potassium is raised, the voltage range of the channel opening shifts to more positive voltages. The inward rectification is mainly due to the blockage of outward current by internal magnesium. The polypeptide is Inward rectifier potassium channel 18 (KCNJ18) (Homo sapiens (Human)).